The following is a 340-amino-acid chain: Phosphoribosylformylglycinamidine cyclo-ligase (340 aa).

Belongs to the AIR synthase family.

It localises to the cytoplasm. It catalyses the reaction 2-formamido-N(1)-(5-O-phospho-beta-D-ribosyl)acetamidine + ATP = 5-amino-1-(5-phospho-beta-D-ribosyl)imidazole + ADP + phosphate + H(+). It participates in purine metabolism; IMP biosynthesis via de novo pathway; 5-amino-1-(5-phospho-D-ribosyl)imidazole from N(2)-formyl-N(1)-(5-phospho-D-ribosyl)glycinamide: step 2/2. The sequence is that of Phosphoribosylformylglycinamidine cyclo-ligase from Streptococcus agalactiae serotype III (strain NEM316).